The sequence spans 141 residues: MARRQTHTSKGPSQRQLRAGELVRHALVGIIAREEFRDPDLEGQMISVTEVRPSPDLRVAKVYVAPLGRGDSAKLAAGLNRCAAFLRGRLGREIEMKFTPELHFHADNSFDTASHVDDLLNRPTVRKDLDATRGSEADAED.

This sequence belongs to the RbfA family. Monomer. Binds 30S ribosomal subunits, but not 50S ribosomal subunits or 70S ribosomes.

It localises to the cytoplasm. Its function is as follows. One of several proteins that assist in the late maturation steps of the functional core of the 30S ribosomal subunit. Associates with free 30S ribosomal subunits (but not with 30S subunits that are part of 70S ribosomes or polysomes). Required for efficient processing of 16S rRNA. May interact with the 5'-terminal helix region of 16S rRNA. The protein is Ribosome-binding factor A of Maricaulis maris (strain MCS10) (Caulobacter maris).